A 141-amino-acid chain; its full sequence is VLSGSDKTNVKGVFGKIGGHAEEYGAETLERMFATYPQTKTYFPHFDLQHGSAQVKAHGKKVAAALVEAANHIDDIAGALSKLSDLHAQKLRVDPVNFKLLGQCFLVVVAIHHPSVLTPEVHASLDKFLCAVGNVLTAKYR.

A Globin domain is found at 1–141 (VLSGSDKTNV…VGNVLTAKYR (141 aa)). Residue His58 coordinates O2. His87 contributes to the heme b binding site.

The protein belongs to the globin family. As to quaternary structure, heterotetramer of two alpha chains and two beta chains. Red blood cells.

Its function is as follows. Involved in oxygen transport from the lung to the various peripheral tissues. The chain is Hemoglobin subunit alpha-A (HBAA) from Chroicocephalus ridibundus (Black-headed gull).